A 332-amino-acid chain; its full sequence is Phenylalanine--tRNA ligase alpha subunit (332 aa).

E252 provides a ligand contact to Mg(2+).

Belongs to the class-II aminoacyl-tRNA synthetase family. Phe-tRNA synthetase alpha subunit type 1 subfamily. In terms of assembly, tetramer of two alpha and two beta subunits. Mg(2+) serves as cofactor.

The protein localises to the cytoplasm. It catalyses the reaction tRNA(Phe) + L-phenylalanine + ATP = L-phenylalanyl-tRNA(Phe) + AMP + diphosphate + H(+). This Marinobacter nauticus (strain ATCC 700491 / DSM 11845 / VT8) (Marinobacter aquaeolei) protein is Phenylalanine--tRNA ligase alpha subunit.